A 528-amino-acid chain; its full sequence is Na(+)/H(+) antiporter NhaB (528 aa).

10 helical membrane-spanning segments follow: residues 28-50 (FLVINPLLFFYVSPFVAGWVLVV), 67-87 (PGGLLAIQAVFIGMTSPSQVL), 98-118 (LLLVFMVAGIYFMKQLLLFVF), 140-160 (AFLSAFLDALTVIAVIIAVAV), 240-260 (FFLRMSPVTMPVLVAGIFTCF), 305-325 (ALIGVWLIAGLALHLASVGLI), 350-370 (EEALPFTALLAVFFAIVGVII), 391-411 (LVIFYIANGLLSMVSDNVFVG), 449-469 (ATPNGQAAFLFLLTSAIAPLI), and 476-496 (MVWMALPYTIVLSIVGVMAIE).

It belongs to the NhaB Na(+)/H(+) (TC 2.A.34) antiporter family.

The protein localises to the cell inner membrane. It carries out the reaction 2 Na(+)(in) + 3 H(+)(out) = 2 Na(+)(out) + 3 H(+)(in). Its function is as follows. Na(+)/H(+) antiporter that extrudes sodium in exchange for external protons. In Shewanella frigidimarina (strain NCIMB 400), this protein is Na(+)/H(+) antiporter NhaB.